A 347-amino-acid chain; its full sequence is MATNGLMASSSVFLHRPRIAFASRTNQTVGKYGKGRVSFMGIGTRRLPVVLSMTAMADSGEEAVKSVLPGNGISIMVNGCSGKMGKAVIKAADSAGVNIVPISFGSAGEDGQRVEVCGKEITVHGPTEREKVLSSVFEKHPELIVVDYTIPSAVNDNAELYSKVGVPFVMGTTGGDRNKLYETVEEAKIYAVISPQMGKQVVAFLAAMEIMAEQFPGAFSGYSLDVMESHQASKLDASGTAKAVISCFQELGVSYDMDQIQLIRDPKQQVEMVGVPEEHISGHAFHLYHLTSPDETVSFEFQHNVCGRSIYAEGTVDAVLFLAKKIRLKADQRIYNMIDVLREGNMR.

The transit peptide at 1–51 (MATNGLMASSSVFLHRPRIAFASRTNQTVGKYGKGRVSFMGIGTRRLPVVL) directs the protein to the chloroplast. Ser52 bears the N-acetylserine mark. Residues 79–84 (GCSGKM), 171–173 (GTT), and 194–197 (SPQM) contribute to the NAD(+) site. His230 functions as the Proton donor/acceptor in the catalytic mechanism. The active-site Proton donor is Lys234. 239–240 (GT) contacts (S)-2,3,4,5-tetrahydrodipicolinate.

It belongs to the DapB family.

The protein localises to the plastid. It is found in the chloroplast. The enzyme catalyses (S)-2,3,4,5-tetrahydrodipicolinate + NAD(+) + H2O = (2S,4S)-4-hydroxy-2,3,4,5-tetrahydrodipicolinate + NADH + H(+). The catalysed reaction is (S)-2,3,4,5-tetrahydrodipicolinate + NADP(+) + H2O = (2S,4S)-4-hydroxy-2,3,4,5-tetrahydrodipicolinate + NADPH + H(+). It participates in amino-acid biosynthesis; L-lysine biosynthesis via DAP pathway; (S)-tetrahydrodipicolinate from L-aspartate: step 4/4. Functionally, catalyzes the conversion of 4-hydroxy-tetrahydrodipicolinate (HTPA) to tetrahydrodipicolinate. This Arabidopsis thaliana (Mouse-ear cress) protein is 4-hydroxy-tetrahydrodipicolinate reductase 1, chloroplastic (DAPB1).